A 494-amino-acid chain; its full sequence is Nuclear distribution protein PAC1 (494 aa).

The region spanning 14 to 46 (QKNELDKSVLRYLNWNYKQTVRHEHAQDYESVR) is the LisH domain. Positions 90–123 (NSIVRLQKKIIELEQNTETLVSQIKDLNTQVSEL) form a coiled coil. 7 WD repeats span residues 153–192 (NVES…IPLA), 196–244 (SHTK…CKFQ), 251–292 (GHEH…SLKT), 295–334 (PHSQ…SVGT), 347–395 (HFIE…LMAH), 415–454 (GHLS…HVWE), and 457–492 (HTGF…SNVF).

This sequence belongs to the WD repeat LIS1/nudF family. Self-associates. Interacts with NDL1 and dynein.

It is found in the cytoplasm. The protein localises to the cytoskeleton. Its subcellular location is the spindle pole. Functionally, positively regulates the activity of the minus-end directed microtubule motor protein dynein. Plays a central role in positioning the mitotic spindle at the bud neck during cell division. Targets cytoplasmic dynein to microtubule plus ends, thereby promoting dynein-mediated microtubule sliding along the bud cortex and consequently the movement of the mitotic spindle to the bud neck. The sequence is that of Nuclear distribution protein PAC1 from Saccharomyces cerevisiae (strain JAY291) (Baker's yeast).